A 498-amino-acid chain; its full sequence is Lysine--tRNA ligase (498 aa).

Mg(2+)-binding residues include E407 and E414.

The protein belongs to the class-II aminoacyl-tRNA synthetase family. Homodimer. It depends on Mg(2+) as a cofactor.

The protein resides in the cytoplasm. The catalysed reaction is tRNA(Lys) + L-lysine + ATP = L-lysyl-tRNA(Lys) + AMP + diphosphate. The protein is Lysine--tRNA ligase of Rhizobium etli (strain CIAT 652).